Consider the following 197-residue polypeptide: Segregation and condensation protein B (197 aa).

The protein belongs to the ScpB family. As to quaternary structure, homodimer. Homodimerization may be required to stabilize the binding of ScpA to the Smc head domains. Component of a cohesin-like complex composed of ScpA, ScpB and the Smc homodimer, in which ScpA and ScpB bind to the head domain of Smc. The presence of the three proteins is required for the association of the complex with DNA.

The protein localises to the cytoplasm. Participates in chromosomal partition during cell division. May act via the formation of a condensin-like complex containing Smc and ScpA that pull DNA away from mid-cell into both cell halves. This is Segregation and condensation protein B from Bacillus pumilus (strain SAFR-032).